We begin with the raw amino-acid sequence, 648 residues long: 1-deoxy-D-xylulose-5-phosphate synthase (648 aa).

Residues His-74 and 115–117 (GHA) contribute to the thiamine diphosphate site. Asp-146 serves as a coordination point for Mg(2+). Thiamine diphosphate is bound by residues 147–148 (GA), Asn-176, Tyr-292, and Glu-375. Asn-176 provides a ligand contact to Mg(2+).

This sequence belongs to the transketolase family. DXPS subfamily. As to quaternary structure, homodimer. Mg(2+) serves as cofactor. The cofactor is thiamine diphosphate.

The enzyme catalyses D-glyceraldehyde 3-phosphate + pyruvate + H(+) = 1-deoxy-D-xylulose 5-phosphate + CO2. The protein operates within metabolic intermediate biosynthesis; 1-deoxy-D-xylulose 5-phosphate biosynthesis; 1-deoxy-D-xylulose 5-phosphate from D-glyceraldehyde 3-phosphate and pyruvate: step 1/1. Its function is as follows. Catalyzes the acyloin condensation reaction between C atoms 2 and 3 of pyruvate and glyceraldehyde 3-phosphate to yield 1-deoxy-D-xylulose-5-phosphate (DXP). The protein is 1-deoxy-D-xylulose-5-phosphate synthase of Synechococcus sp. (strain JA-2-3B'a(2-13)) (Cyanobacteria bacterium Yellowstone B-Prime).